The following is a 554-amino-acid chain: Dihydroxy-acid dehydratase (554 aa).

D78 is a binding site for Mg(2+). C119 contacts [2Fe-2S] cluster. Positions 120 and 121 each coordinate Mg(2+). K121 bears the N6-carboxylysine mark. C191 contacts [2Fe-2S] cluster. Residue E442 coordinates Mg(2+). Residue S468 is the Proton acceptor of the active site.

It belongs to the IlvD/Edd family. As to quaternary structure, homodimer. The cofactor is [2Fe-2S] cluster. Mg(2+) serves as cofactor.

It catalyses the reaction (2R)-2,3-dihydroxy-3-methylbutanoate = 3-methyl-2-oxobutanoate + H2O. The catalysed reaction is (2R,3R)-2,3-dihydroxy-3-methylpentanoate = (S)-3-methyl-2-oxopentanoate + H2O. It participates in amino-acid biosynthesis; L-isoleucine biosynthesis; L-isoleucine from 2-oxobutanoate: step 3/4. It functions in the pathway amino-acid biosynthesis; L-valine biosynthesis; L-valine from pyruvate: step 3/4. Its function is as follows. Functions in the biosynthesis of branched-chain amino acids. Catalyzes the dehydration of (2R,3R)-2,3-dihydroxy-3-methylpentanoate (2,3-dihydroxy-3-methylvalerate) into 2-oxo-3-methylpentanoate (2-oxo-3-methylvalerate) and of (2R)-2,3-dihydroxy-3-methylbutanoate (2,3-dihydroxyisovalerate) into 2-oxo-3-methylbutanoate (2-oxoisovalerate), the penultimate precursor to L-isoleucine and L-valine, respectively. The sequence is that of Dihydroxy-acid dehydratase from Acetivibrio thermocellus (strain ATCC 27405 / DSM 1237 / JCM 9322 / NBRC 103400 / NCIMB 10682 / NRRL B-4536 / VPI 7372) (Clostridium thermocellum).